Here is a 223-residue protein sequence, read N- to C-terminus: Spore wall protein 26 (223 aa).

Positions 1 to 16 are cleaved as a signal peptide; the sequence is MNIIIFSLMTISFLRA. The HBM signature appears at 207–214; the sequence is SKKKLDKS.

Its subcellular location is the spore core. It localises to the spore wall. The protein resides in the spore. The protein localises to the perispore. Functionally, spore wall protein involved in the adhesion to host cells surface. Microsporidian spore adherence is an integral part of activation and host cell invasion which requires the extrusion at the spore apex of a very long and coiled structure, the polar tube, through which the sporoplasm is pushed to enter into the potential host cell. This Nosema bombycis (strain CQ1 / CVCC 102059) (Microsporidian parasite) protein is Spore wall protein 26 (SWP26).